The chain runs to 246 residues: NAD(P)H-quinone oxidoreductase subunit K, organellar chromatophore (246 aa).

[4Fe-4S] cluster is bound by residues C58, C59, C123, and C154.

This sequence belongs to the complex I 20 kDa subunit family. As to quaternary structure, NDH-1 is composed of 14 different subunits. Subunits nuoB, C, D, E, F, and G constitute the peripheral sector of the complex. The cofactor is [4Fe-4S] cluster.

The protein localises to the plastid. It is found in the organellar chromatophore thylakoid membrane. The catalysed reaction is a quinone + NADH + H(+) = a quinol + NAD(+). Its function is as follows. NDH-1 shuttles electrons from NADH, via FMN and iron-sulfur (Fe-S) centers, to quinones in the respiratory chain. Couples the redox reaction to proton translocation (for every two electrons transferred, four hydrogen ions are translocated across the cytoplasmic membrane), and thus conserves the redox energy in a proton gradient. The polypeptide is NAD(P)H-quinone oxidoreductase subunit K, organellar chromatophore (Paulinella chromatophora).